An 83-amino-acid chain; its full sequence is Mu-theraphotoxin-Hhn2g (83 aa).

Positions 1-21 (MKASMYLALAGLVLLFVVGYA) are cleaved as a signal peptide. A propeptide spanning residues 22–48 (SESEEKEFPRELLSKIFAVDDFKGEER) is cleaved from the precursor. 2 disulfides stabilise this stretch: cysteine 50–cysteine 65 and cysteine 57–cysteine 70. At leucine 81 the chain carries Leucine amide.

It belongs to the neurotoxin 10 (Hwtx-1) family. 15 (Hntx-3) subfamily. As to quaternary structure, monomer. As to expression, expressed by the venom gland.

Its subcellular location is the secreted. Lethal neurotoxin. Selectively blocks tetrodotoxin-sensitive voltage-gated sodium channels (Nav). Does not affect tetrodotoxin-resistant voltage-gated sodium channels or calcium channels. This chain is Mu-theraphotoxin-Hhn2g, found in Cyriopagopus hainanus (Chinese bird spider).